Here is a 216-residue protein sequence, read N- to C-terminus: MTATRNVKGLLGTKLGMTQVWDENNKLIPVTVVQADSNVITQLRNADVDGYVAVQIGYGQIDPRKVTKPLAGHFEKAGVTPRRHVVELRTADAAEYELGQELSVEVFEAGQKIDVVGTTKGKGFAGVMKRHGFHGVGASHGAHKNHRKPGSIGGASTPSRVFKGMKMAGRMGAVRHTTLNLTVHAVDVEKSLLLIKGAVPGARGQVVLVRTAVKGA.

The interval 137 to 158 (GASHGAHKNHRKPGSIGGASTP) is disordered.

Belongs to the universal ribosomal protein uL3 family. Part of the 50S ribosomal subunit. Forms a cluster with proteins L14 and L19.

In terms of biological role, one of the primary rRNA binding proteins, it binds directly near the 3'-end of the 23S rRNA, where it nucleates assembly of the 50S subunit. The polypeptide is Large ribosomal subunit protein uL3 (Arthrobacter sp. (strain FB24)).